A 558-amino-acid polypeptide reads, in one-letter code: Potassium-transporting ATPase potassium-binding subunit (558 aa).

The next 12 membrane-spanning stretches (helical) occupy residues 1-21 (MSIV…SRYL), 60-80 (IKHF…LLLI), 129-149 (VITF…IAML), 169-189 (FIVR…ISQG), 246-266 (WSNY…VFLF), 281-301 (IMIF…CLYF), 326-346 (FGIG…TGTV), 353-373 (LTPL…VFGG), 376-396 (VGLM…SLMI), 415-435 (IALS…LAFI), 485-505 (IVML…VSSL), and 523-543 (LFFS…TFLP).

The protein belongs to the KdpA family. In terms of assembly, the system is composed of three essential subunits: KdpA, KdpB and KdpC.

It is found in the cell membrane. Its function is as follows. Part of the high-affinity ATP-driven potassium transport (or Kdp) system, which catalyzes the hydrolysis of ATP coupled with the electrogenic transport of potassium into the cytoplasm. This subunit binds the extracellular potassium ions and delivers the ions to the membrane domain of KdpB through an intramembrane tunnel. This is Potassium-transporting ATPase potassium-binding subunit from Staphylococcus haemolyticus (strain JCSC1435).